We begin with the raw amino-acid sequence, 414 residues long: Glutamyl-tRNA reductase (414 aa).

Substrate contacts are provided by residues 49–52, S108, 113–115, and Q119; these read TCNR and EPQ. The active-site Nucleophile is C50. 188–193 contacts NADP(+); the sequence is GAGQTG.

The protein belongs to the glutamyl-tRNA reductase family. Homodimer.

The enzyme catalyses (S)-4-amino-5-oxopentanoate + tRNA(Glu) + NADP(+) = L-glutamyl-tRNA(Glu) + NADPH + H(+). It functions in the pathway porphyrin-containing compound metabolism; protoporphyrin-IX biosynthesis; 5-aminolevulinate from L-glutamyl-tRNA(Glu): step 1/2. In terms of biological role, catalyzes the NADPH-dependent reduction of glutamyl-tRNA(Glu) to glutamate 1-semialdehyde (GSA). The protein is Glutamyl-tRNA reductase of Francisella tularensis subsp. holarctica (strain FTNF002-00 / FTA).